The primary structure comprises 434 residues: MSIITDVLAREVLDSRGNPTVEVELYTEDGGFGRALVPSGASTGEHEAVELRDGDKDRFGGKGVLKAVGHVNNEIAKAVIGHDVTEQRLIDQTMIDLDGTPNKGKFGANAILGVSLAAARAAADEVGLPLYQYLGGPNAHVLPTPMMNVLNGGAHSTNTVDFQEFMIMPVGAKSVREAVRMGSETFHALQALLKSKGDITAVGDEGGFAPNLKDNEEAFELLVEAIKKAGYKPGDDIALAFDVAASEMYDAESKTYTTKWSNPDKKYTTEEWTDMIDGYINKYPIVSVEDPIDENDWEGWQTFTKKMGDKVQIVGDDLFVTNTDYLKKGIDMGVANSILIKLNQIGTLTETFEAIEMAKEAGYTAVVSHRSGETEDTTIADLVVATNAGQIKTGSMSRTDRIAKYNQLMRIEDQLGAQSLYKGRKSFYNVKAID.

(2R)-2-phosphoglycerate is bound at residue Q163. The active-site Proton donor is E205. Residues D242, E289, and D316 each contribute to the Mg(2+) site. (2R)-2-phosphoglycerate contacts are provided by K341, R370, S371, and K392. The active-site Proton acceptor is the K341.

The protein belongs to the enolase family. It depends on Mg(2+) as a cofactor.

The protein localises to the cytoplasm. The protein resides in the secreted. Its subcellular location is the cell surface. The enzyme catalyses (2R)-2-phosphoglycerate = phosphoenolpyruvate + H2O. It functions in the pathway carbohydrate degradation; glycolysis; pyruvate from D-glyceraldehyde 3-phosphate: step 4/5. Its function is as follows. Catalyzes the reversible conversion of 2-phosphoglycerate (2-PG) into phosphoenolpyruvate (PEP). It is essential for the degradation of carbohydrates via glycolysis. This chain is Enolase, found in Lacticaseibacillus casei (strain BL23) (Lactobacillus casei).